A 231-amino-acid chain; its full sequence is Uracil-DNA glycosylase (231 aa).

Catalysis depends on Asp-74, which acts as the Proton acceptor.

Belongs to the uracil-DNA glycosylase (UDG) superfamily. UNG family.

Its subcellular location is the cytoplasm. It carries out the reaction Hydrolyzes single-stranded DNA or mismatched double-stranded DNA and polynucleotides, releasing free uracil.. Functionally, excises uracil residues from the DNA which can arise as a result of misincorporation of dUMP residues by DNA polymerase or due to deamination of cytosine. This is Uracil-DNA glycosylase from Campylobacter jejuni subsp. doylei (strain ATCC BAA-1458 / RM4099 / 269.97).